The following is a 280-amino-acid chain: Small ribosomal subunit protein uS3 (280 aa).

In terms of domain architecture, KH type-2 spans 38 to 106 (IRKLLATGLE…QVQLNILEVK (69 aa)). Residues 216–280 (AAAPAADRPR…SAGQPETTES (65 aa)) are disordered. Residues 237–270 (SGASGTTATSTDAGRAASEGTVEAPATEAAATAP) are compositionally biased toward low complexity.

The protein belongs to the universal ribosomal protein uS3 family. In terms of assembly, part of the 30S ribosomal subunit. Forms a tight complex with proteins S10 and S14.

In terms of biological role, binds the lower part of the 30S subunit head. Binds mRNA in the 70S ribosome, positioning it for translation. This chain is Small ribosomal subunit protein uS3, found in Mycolicibacterium vanbaalenii (strain DSM 7251 / JCM 13017 / BCRC 16820 / KCTC 9966 / NRRL B-24157 / PYR-1) (Mycobacterium vanbaalenii).